We begin with the raw amino-acid sequence, 1241 residues long: Plasma membrane calcium-transporting ATPase 4 (1241 aa).

Topologically, residues 1 to 92 are cytoplasmic; sequence MTNPSDRVLP…NVIPPKKPKT (92 aa). The residue at position 13 (serine 13) is a Phosphoserine. The chain crosses the membrane as a helical span at residues 93–113; that stretch reads FLELVWEALQDVTLIILEIAA. The Extracellular portion of the chain corresponds to 114 to 150; it reads IISLVLSFYRPAGEENELCGQVATTPEDENEAQAGWI. Residues 151–171 form a helical membrane-spanning segment; it reads EGAAILFSVIIVVLVTAFNDW. Topologically, residues 172-356 are cytoplasmic; it reads SKEKQFRGLQ…KEKSVLQGKL (185 aa). The segment at 294 to 318 is disordered; sequence EGEKKKKGKKQGVPENRNKAKTQDG. Serine 328 carries the post-translational modification Phosphoserine. Residues 357–376 traverse the membrane as a helical segment; it reads TRLAVQIGKAGLLMSALTVF. At 377–409 the chain is on the extracellular side; the sequence is ILILYFVIDNFVINRRPWLPECTPIYIQYFVKF. Residues 410 to 427 form a helical membrane-spanning segment; that stretch reads FIIGITVLVVAVPEGLPL. The Cytoplasmic portion of the chain corresponds to 428 to 840; sequence AVTISLAYSV…MWGRNVYDSI (413 aa). Aspartate 465 functions as the 4-aspartylphosphate intermediate in the catalytic mechanism. Residues aspartate 785 and aspartate 789 each coordinate Mg(2+). A helical transmembrane segment spans residues 841 to 860; it reads SKFLQFQLTVNVVAVIVAFT. Residues 861-870 lie on the Extracellular side of the membrane; sequence GACITQDSPL. Residues 871–891 traverse the membrane as a helical segment; the sequence is KAVQMLWVNLIMDTFASLALA. The Cytoplasmic segment spans residues 892-911; the sequence is TEPPTESLLKRRPYGRNKPL. The chain crosses the membrane as a helical span at residues 912–934; that stretch reads ISRTMMKNILGHAFYQLIVIFIL. Over 935–952 the chain is Extracellular; the sequence is VFAGEKFFDIDSGRKAPL. A helical membrane pass occupies residues 953-974; that stretch reads HSPPSQHYTIVFNTFVLMQLFN. Topologically, residues 975–993 are cytoplasmic; the sequence is EINSRKIHGEKNVFSGIYR. The chain crosses the membrane as a helical span at residues 994–1015; that stretch reads NIIFCSVVLGTFICQIFIVEFG. The Extracellular portion of the chain corresponds to 1016 to 1025; the sequence is GKPFSCTSLS. Residues 1026-1047 traverse the membrane as a helical segment; that stretch reads LSQWLWCLFIGIGELLWGQFIS. Topologically, residues 1048–1241 are cytoplasmic; the sequence is AIPTRSLKFL…SSLQSLETSV (194 aa). Residues 1086–1103 are calmodulin-binding subdomain A; the sequence is LRRGQILWFRGLNRIQTQ. Threonine 1102 carries the post-translational modification Phosphothreonine; by PKC. Residues 1104–1113 are calmodulin-binding subdomain B; it reads IDVINTFQTG.

This sequence belongs to the cation transport ATPase (P-type) (TC 3.A.3) family. Type IIB subfamily. In terms of assembly, interacts with PDZD11. Interacts with SLC35G1 and STIM1. Interacts with calmodulin. As to expression, isoform XB is the most abundant isoform and is expressed ubiquitously. Isoforms containing segment Z have only been detected in heart, while isoforms containing segment a have been found in heart, stomach and brain cortex.

Its subcellular location is the cell membrane. It localises to the cell projection. The protein resides in the cilium. The protein localises to the flagellum membrane. It catalyses the reaction Ca(2+)(in) + ATP + H2O = Ca(2+)(out) + ADP + phosphate + H(+). With respect to regulation, activated by calcium/calmodulin. In terms of biological role, calcium/calmodulin-regulated and magnesium-dependent enzyme that catalyzes the hydrolysis of ATP coupled with the transport of calcium out of the cell. By regulating sperm cell calcium homeostasis, may play a role in sperm motility. The polypeptide is Plasma membrane calcium-transporting ATPase 4 (Homo sapiens (Human)).